The sequence spans 65 residues: Large ribosomal subunit protein bL33c (65 aa).

Belongs to the bacterial ribosomal protein bL33 family.

It localises to the plastid. The protein localises to the chloroplast. The polypeptide is Large ribosomal subunit protein bL33c (Zygnema circumcarinatum (Green alga)).